The chain runs to 352 residues: tRNA-specific 2-thiouridylase MnmA (352 aa).

ATP contacts are provided by residues 11–18 (AMSGGVDS) and Met-37. Cys-101 functions as the Nucleophile in the catalytic mechanism. Cys-101 and Cys-197 are disulfide-bonded. Gly-125 serves as a coordination point for ATP. Positions 147 to 149 (KDQ) are interaction with tRNA. The Cysteine persulfide intermediate role is filled by Cys-197. Positions 302 to 303 (RY) are interaction with tRNA.

This sequence belongs to the MnmA/TRMU family.

The protein localises to the cytoplasm. The enzyme catalyses S-sulfanyl-L-cysteinyl-[protein] + uridine(34) in tRNA + AH2 + ATP = 2-thiouridine(34) in tRNA + L-cysteinyl-[protein] + A + AMP + diphosphate + H(+). Functionally, catalyzes the 2-thiolation of uridine at the wobble position (U34) of tRNA, leading to the formation of s(2)U34. This chain is tRNA-specific 2-thiouridylase MnmA, found in Syntrophotalea carbinolica (strain DSM 2380 / NBRC 103641 / GraBd1) (Pelobacter carbinolicus).